Reading from the N-terminus, the 406-residue chain is Argininosuccinate synthase (406 aa).

ATP contacts are provided by residues 10–18 and Ala37; that span reads AYSGGLDTS. Residues Tyr88 and Ser93 each coordinate L-citrulline. Residue Gly118 participates in ATP binding. Residues Thr120, Asn124, and Asp125 each contribute to the L-aspartate site. Asn124 is a binding site for L-citrulline. Residues Arg128, Ser180, Ser189, Glu265, and Tyr277 each contribute to the L-citrulline site.

Belongs to the argininosuccinate synthase family. Type 1 subfamily. In terms of assembly, homotetramer.

The protein resides in the cytoplasm. The catalysed reaction is L-citrulline + L-aspartate + ATP = 2-(N(omega)-L-arginino)succinate + AMP + diphosphate + H(+). Its pathway is amino-acid biosynthesis; L-arginine biosynthesis; L-arginine from L-ornithine and carbamoyl phosphate: step 2/3. This is Argininosuccinate synthase from Methylobacillus flagellatus (strain ATCC 51484 / DSM 6875 / VKM B-1610 / KT).